The sequence spans 953 residues: UvrABC system protein A (953 aa).

33-40 (GLSGSGKS) serves as a coordination point for ATP. 2 consecutive ABC transporter domains span residues 320 to 599 (WGST…EESI) and 619 to 949 (GHDN…RYLK). 652 to 659 (GVSGSGKS) is a binding site for ATP. The C4-type zinc-finger motif lies at 752-778 (CEACQGDGLIKIEMHFLPDVYVKCDIC).

It belongs to the ABC transporter superfamily. UvrA family. As to quaternary structure, forms a heterotetramer with UvrB during the search for lesions.

The protein localises to the cytoplasm. The UvrABC repair system catalyzes the recognition and processing of DNA lesions. UvrA is an ATPase and a DNA-binding protein. A damage recognition complex composed of 2 UvrA and 2 UvrB subunits scans DNA for abnormalities. When the presence of a lesion has been verified by UvrB, the UvrA molecules dissociate. In Rickettsia prowazekii (strain Madrid E), this protein is UvrABC system protein A.